A 95-amino-acid chain; its full sequence is Small ribosomal subunit protein bS6 (95 aa).

This sequence belongs to the bacterial ribosomal protein bS6 family.

Binds together with bS18 to 16S ribosomal RNA. The sequence is that of Small ribosomal subunit protein bS6 from Desulforamulus reducens (strain ATCC BAA-1160 / DSM 100696 / MI-1) (Desulfotomaculum reducens).